We begin with the raw amino-acid sequence, 1190 residues long: DNA-directed RNA polymerase subunit beta (1190 aa).

The interval 1155–1190 is disordered; that stretch reads ENFDDDDDHAPDAIMVDVKPAEREEAGEEKDAVTKE. The span at 1173-1190 shows a compositional bias: basic and acidic residues; the sequence is KPAEREEAGEEKDAVTKE.

The protein belongs to the RNA polymerase beta chain family. In terms of assembly, the RNAP catalytic core consists of 2 alpha, 1 beta, 1 beta' and 1 omega subunit. When a sigma factor is associated with the core the holoenzyme is formed, which can initiate transcription.

It catalyses the reaction RNA(n) + a ribonucleoside 5'-triphosphate = RNA(n+1) + diphosphate. Its function is as follows. DNA-dependent RNA polymerase catalyzes the transcription of DNA into RNA using the four ribonucleoside triphosphates as substrates. This is DNA-directed RNA polymerase subunit beta from Geobacillus kaustophilus (strain HTA426).